Here is a 132-residue protein sequence, read N- to C-terminus: Small ribosomal subunit protein uS19 (132 aa).

This sequence belongs to the universal ribosomal protein uS19 family.

Functionally, protein S19 forms a complex with S13 that binds strongly to the 16S ribosomal RNA. The sequence is that of Small ribosomal subunit protein uS19 from Korarchaeum cryptofilum (strain OPF8).